The following is a 365-amino-acid chain: Myocyte-specific enhancer factor 2B (365 aa).

The region spanning 3 to 57 (RKKIQISRILDQRNRQVTFTKRKFGLMKKAYELSVLCDCEIALIIFNSANRLFQY) is the MADS-box domain. The mef2-type DNA-binding region spans 58-86 (ASTDMDRVLLKYTEYSEPHESRTNTDILE). Disordered regions lie at residues 94–124 (GLDGPELEPDEGPEEPGEKFRRLAGEGGDPA), 142–309 (VVYG…SPGP), and 321–365 (AGCP…KTQQ). Residues 98 to 108 (PELEPDEGPEE) show a composition bias toward acidic residues. The segment covering 223 to 240 (NTSRSLYSGLQNPCSTAT) has biased composition (polar residues). Composition is skewed to low complexity over residues 277 to 289 (PQSASSLSASLRP) and 326 to 346 (PTAGPGRRSPGGTSPERSPGT). Polar residues predominate over residues 354–365 (TSLQASSEKTQQ).

It belongs to the MEF2 family. In terms of assembly, interacts with HDAC7. Heterodimer. Interacts with HDAC9. Expressed in skeletal and cardiac muscle and brain.

Its subcellular location is the nucleus. Its function is as follows. Transcriptional activator which binds specifically to the MEF2 element, 5'-YTA[AT](4)TAR-3', found in numerous muscle-specific genes. Activates transcription via this element. May be involved in muscle-specific and/or growth factor-related transcription. This chain is Myocyte-specific enhancer factor 2B (MEF2B), found in Homo sapiens (Human).